An 84-amino-acid chain; its full sequence is Putative membrane protein insertion efficiency factor (84 aa).

The segment at 64–84 (GGSGYDPPPPRHQPRKWKCEE) is disordered. Basic residues predominate over residues 75–84 (HQPRKWKCEE).

The protein belongs to the UPF0161 family.

Its subcellular location is the cell inner membrane. Functionally, could be involved in insertion of integral membrane proteins into the membrane. This is Putative membrane protein insertion efficiency factor from Caulobacter vibrioides (strain ATCC 19089 / CIP 103742 / CB 15) (Caulobacter crescentus).